The primary structure comprises 554 residues: MNLAWLQGLSLGLLSPPAPALLIFRSFTMAKVLVSDSIDQVGIDILKQVAQVDVKTGLSEAEIIDIVPEYDAIMLRSATKVTEKIIQAGSQLKIIGRAGVGVDNIDVPAATRQGIVVVNSPEGNTIAAAEHALAMMMALARHIPDANKSVKESKWERKQFIGTEVYKKTLGVVGLGKIGSHVAGVAKAMGMKLLAYDPFISQERADQIGCTLVDLDLLFSEADFITLHIPKTPETANLINAETLAKMKPTARIINCSRGGIIDEEALVTAIETAQIGGAALDVFAQEPLGESRLREFSNVILTPHLGASTEEAQVNVAVDVAEQIRDVLLGLPARSAVNIPGLTPDVMEKLRPYLKLAETLGTLVGQLAGGRIDRLTVCLQGDLAEYTNSQPLVVAAIKGLLSQALRERVNYVNAAIEAKERGIRVIETKDASVRDYSGSLHLKATGTMGEHSATGALLSNGEIRITDVDEFPINVPPNNYMLFTLHRDMPGIIGKIGSLLGSFNVNIASMQVGRKIVRGDAIMALSLDDPLPDGLLSEITKVAGIRDAYTVKL.

Residues 177-178 (KI), Asp-197, 256-258 (CSR), and Asp-282 contribute to the NAD(+) site. Arg-258 is an active-site residue. Glu-287 is a catalytic residue. His-305 acts as the Proton donor in catalysis. NAD(+) is bound at residue 305 to 308 (HLGA). The ACT domain maps to 482–554 (MLFTLHRDMP…GIRDAYTVKL (73 aa)).

It belongs to the D-isomer specific 2-hydroxyacid dehydrogenase family.

It carries out the reaction (2R)-3-phosphoglycerate + NAD(+) = 3-phosphooxypyruvate + NADH + H(+). The enzyme catalyses (R)-2-hydroxyglutarate + NAD(+) = 2-oxoglutarate + NADH + H(+). It functions in the pathway amino-acid biosynthesis; L-serine biosynthesis; L-serine from 3-phospho-D-glycerate: step 1/3. Its function is as follows. Catalyzes the reversible oxidation of 3-phospho-D-glycerate to 3-phosphonooxypyruvate, the first step of the phosphorylated L-serine biosynthesis pathway. Also catalyzes the reversible oxidation of 2-hydroxyglutarate to 2-oxoglutarate. The polypeptide is D-3-phosphoglycerate dehydrogenase (serA) (Synechocystis sp. (strain ATCC 27184 / PCC 6803 / Kazusa)).